The primary structure comprises 200 residues: Protein GrpE (200 aa).

2 stretches are compositionally biased toward acidic residues: residues 1–17 and 34–44; these read MNEQPNEELQSEDEQFD and AFAEAGEETRD. The tract at residues 1–49 is disordered; the sequence is MNEQPNEELQSEDEQFDPQETVSFEGETAANDEAFAEAGEETRDEEMTR.

The protein belongs to the GrpE family. In terms of assembly, homodimer.

Its subcellular location is the cytoplasm. Functionally, participates actively in the response to hyperosmotic and heat shock by preventing the aggregation of stress-denatured proteins, in association with DnaK and GrpE. It is the nucleotide exchange factor for DnaK and may function as a thermosensor. Unfolded proteins bind initially to DnaJ; upon interaction with the DnaJ-bound protein, DnaK hydrolyzes its bound ATP, resulting in the formation of a stable complex. GrpE releases ADP from DnaK; ATP binding to DnaK triggers the release of the substrate protein, thus completing the reaction cycle. Several rounds of ATP-dependent interactions between DnaJ, DnaK and GrpE are required for fully efficient folding. The chain is Protein GrpE from Rhodopirellula baltica (strain DSM 10527 / NCIMB 13988 / SH1).